Reading from the N-terminus, the 224-residue chain is UPF0758 protein PSPTO_0086 (224 aa).

Residues 102 to 224 (ALENPAQVRN…PLSMVEKGLM (123 aa)) form the MPN domain. Residues histidine 173, histidine 175, and aspartate 186 each coordinate Zn(2+). Residues 173–186 (HNHPSGITTPSRSD) carry the JAMM motif motif.

The protein belongs to the UPF0758 family.

This chain is UPF0758 protein PSPTO_0086, found in Pseudomonas syringae pv. tomato (strain ATCC BAA-871 / DC3000).